The chain runs to 241 residues: uncharacterized protein (241 aa).

The next 5 helical transmembrane spans lie at 7–27 (LIFL…WSVF), 37–57 (LFLL…LLLI), 72–92 (IIAL…SGFG), 110–130 (INLV…YVAF), and 138–158 (FGTL…IKII).

It is found in the cell membrane. This is an uncharacterized protein from Methanocaldococcus jannaschii (strain ATCC 43067 / DSM 2661 / JAL-1 / JCM 10045 / NBRC 100440) (Methanococcus jannaschii).